The primary structure comprises 92 residues: Defensin-like protein 294 (92 aa).

The signal sequence occupies residues 1–26; it reads MASRATSLFIFFFLISCTFMLLETNA. Cystine bridges form between cysteine 63-cysteine 82, cysteine 69-cysteine 87, and cysteine 75-cysteine 89.

This sequence belongs to the DEFL family.

The protein resides in the secreted. This is Defensin-like protein 294 from Arabidopsis thaliana (Mouse-ear cress).